The primary structure comprises 331 residues: Beta-ketoacyl-[acyl-carrier-protein] synthase III (331 aa).

Active-site residues include Cys113 and His253. Positions Gln254 to Arg258 are ACP-binding. Residue Asn283 is part of the active site.

Belongs to the thiolase-like superfamily. FabH family. Homodimer.

Its subcellular location is the cytoplasm. The catalysed reaction is malonyl-[ACP] + acetyl-CoA + H(+) = 3-oxobutanoyl-[ACP] + CO2 + CoA. The protein operates within lipid metabolism; fatty acid biosynthesis. Catalyzes the condensation reaction of fatty acid synthesis by the addition to an acyl acceptor of two carbons from malonyl-ACP. Catalyzes the first condensation reaction which initiates fatty acid synthesis and may therefore play a role in governing the total rate of fatty acid production. Possesses both acetoacetyl-ACP synthase and acetyl transacylase activities. Its substrate specificity determines the biosynthesis of branched-chain and/or straight-chain of fatty acids. In Desulfitobacterium hafniense (strain Y51), this protein is Beta-ketoacyl-[acyl-carrier-protein] synthase III.